Reading from the N-terminus, the 877-residue chain is Phosphoenolpyruvate carboxylase (877 aa).

Catalysis depends on residues histidine 138 and lysine 544.

This sequence belongs to the PEPCase type 1 family. Mg(2+) is required as a cofactor.

It catalyses the reaction oxaloacetate + phosphate = phosphoenolpyruvate + hydrogencarbonate. Forms oxaloacetate, a four-carbon dicarboxylic acid source for the tricarboxylic acid cycle. This is Phosphoenolpyruvate carboxylase from Vibrio vulnificus (strain CMCP6).